Here is a 390-residue protein sequence, read N- to C-terminus: S-adenosylmethionine synthase (390 aa).

His-17 lines the ATP pocket. Asp-19 is a binding site for Mg(2+). Position 45 (Glu-45) interacts with K(+). Residues Glu-58 and Gln-101 each coordinate L-methionine. Residues Gln-101 to Thr-111 are flexible loop. Residues Asp-160–Lys-162, Arg-226–Phe-227, Asp-235, Arg-241–Lys-242, Ala-258, and Lys-262 each bind ATP. Asp-235 contributes to the L-methionine binding site. Lys-266 contributes to the L-methionine binding site.

It belongs to the AdoMet synthase family. In terms of assembly, homotetramer; dimer of dimers. It depends on Mg(2+) as a cofactor. Requires K(+) as cofactor.

The protein localises to the cytoplasm. It carries out the reaction L-methionine + ATP + H2O = S-adenosyl-L-methionine + phosphate + diphosphate. It functions in the pathway amino-acid biosynthesis; S-adenosyl-L-methionine biosynthesis; S-adenosyl-L-methionine from L-methionine: step 1/1. Its function is as follows. Catalyzes the formation of S-adenosylmethionine (AdoMet) from methionine and ATP. The overall synthetic reaction is composed of two sequential steps, AdoMet formation and the subsequent tripolyphosphate hydrolysis which occurs prior to release of AdoMet from the enzyme. This Anaeromyxobacter dehalogenans (strain 2CP-1 / ATCC BAA-258) protein is S-adenosylmethionine synthase.